The sequence spans 164 residues: Lipoprotein signal peptidase (164 aa).

The next 3 membrane-spanning stretches (helical) occupy residues tryptophan 12–glutamine 32, tryptophan 70–serine 90, and alanine 102–valine 122. Active-site residues include aspartate 123 and aspartate 141. Residues phenylalanine 137–leucine 157 traverse the membrane as a helical segment.

It belongs to the peptidase A8 family.

It localises to the cell inner membrane. The enzyme catalyses Release of signal peptides from bacterial membrane prolipoproteins. Hydrolyzes -Xaa-Yaa-Zaa-|-(S,diacylglyceryl)Cys-, in which Xaa is hydrophobic (preferably Leu), and Yaa (Ala or Ser) and Zaa (Gly or Ala) have small, neutral side chains.. It participates in protein modification; lipoprotein biosynthesis (signal peptide cleavage). Functionally, this protein specifically catalyzes the removal of signal peptides from prolipoproteins. In Shigella flexneri, this protein is Lipoprotein signal peptidase.